The primary structure comprises 201 residues: NAD(P)H dehydrogenase (quinone) (201 aa).

Residues 4–191 enclose the Flavodoxin-like domain; sequence VLVLYYSMYG…KIAKCQGVHV (188 aa). FMN is bound by residues 10 to 15 and 79 to 81; these read SMYGHV and TRF. Position 12 (Y12) interacts with NAD(+). Substrate is bound at residue W99. Residues 114-120 and H135 each bind FMN; that span reads STGTQHG.

It belongs to the WrbA family. The cofactor is FMN.

The catalysed reaction is a quinone + NADH + H(+) = a quinol + NAD(+). It carries out the reaction a quinone + NADPH + H(+) = a quinol + NADP(+). This Hydrogenovibrio crunogenus (strain DSM 25203 / XCL-2) (Thiomicrospira crunogena) protein is NAD(P)H dehydrogenase (quinone).